A 505-amino-acid chain; its full sequence is Maturase K (505 aa).

Belongs to the intron maturase 2 family. MatK subfamily.

The protein localises to the plastid. It localises to the chloroplast. Functionally, usually encoded in the trnK tRNA gene intron. Probably assists in splicing its own and other chloroplast group II introns. The sequence is that of Maturase K from Kunzea ericoides (White teatree).